The chain runs to 156 residues: Small ribosomal subunit protein uS7 (156 aa).

The protein belongs to the universal ribosomal protein uS7 family. As to quaternary structure, part of the 30S ribosomal subunit. Contacts proteins S9 and S11.

In terms of biological role, one of the primary rRNA binding proteins, it binds directly to 16S rRNA where it nucleates assembly of the head domain of the 30S subunit. Is located at the subunit interface close to the decoding center, probably blocks exit of the E-site tRNA. In Kocuria rhizophila (strain ATCC 9341 / DSM 348 / NBRC 103217 / DC2201), this protein is Small ribosomal subunit protein uS7.